The chain runs to 554 residues: Valerianol synthase TPS1B (554 aa).

Positions 307 and 311 each coordinate Mg(2+). Residues 326–330 (VQRWD) carry the DDXXD motif motif. Mg(2+)-binding residues include D452, S456, and E460.

It belongs to the terpene synthase family. Mg(2+) is required as a cofactor.

The catalysed reaction is (2E,6E)-farnesyl diphosphate + H2O = valerianol + diphosphate. Its pathway is secondary metabolite biosynthesis; terpenoid biosynthesis. In terms of biological role, terpene synthase that catalyzes the biosynthesis of the terpene valerianol, which is a volatile compound of floral scent. The chain is Valerianol synthase TPS1B from Camellia hiemalis (Camellia).